A 392-amino-acid polypeptide reads, in one-letter code: Lipid-A-disaccharide synthase (392 aa).

Belongs to the LpxB family.

It catalyses the reaction a lipid X + a UDP-2-N,3-O-bis[(3R)-3-hydroxyacyl]-alpha-D-glucosamine = a lipid A disaccharide + UDP + H(+). The protein operates within bacterial outer membrane biogenesis; LPS lipid A biosynthesis. Condensation of UDP-2,3-diacylglucosamine and 2,3-diacylglucosamine-1-phosphate to form lipid A disaccharide, a precursor of lipid A, a phosphorylated glycolipid that anchors the lipopolysaccharide to the outer membrane of the cell. The chain is Lipid-A-disaccharide synthase from Syntrophotalea carbinolica (strain DSM 2380 / NBRC 103641 / GraBd1) (Pelobacter carbinolicus).